A 185-amino-acid chain; its full sequence is Ribosome-recycling factor (185 aa).

This sequence belongs to the RRF family.

It is found in the cytoplasm. Responsible for the release of ribosomes from messenger RNA at the termination of protein biosynthesis. May increase the efficiency of translation by recycling ribosomes from one round of translation to another. This Exiguobacterium sibiricum (strain DSM 17290 / CCUG 55495 / CIP 109462 / JCM 13490 / 255-15) protein is Ribosome-recycling factor.